Consider the following 177-residue polypeptide: Interleukin-10 (177 aa).

The N-terminal stretch at 1–19 is a signal peptide; it reads MPSSSAVLCCLVFLAGVAA. Intrachain disulfides connect cysteine 31–cysteine 127 and cysteine 81–cysteine 133. An N-linked (GlcNAc...) asparagine glycan is attached at asparagine 135.

The protein belongs to the IL-10 family. As to quaternary structure, homodimer. Interacts with IL10RA and IL10RB.

The protein resides in the secreted. Its function is as follows. Major immune regulatory cytokine that acts on many cells of the immune system where it has profound anti-inflammatory functions, limiting excessive tissue disruption caused by inflammation. Mechanistically, IL10 binds to its heterotetrameric receptor comprising IL10RA and IL10RB leading to JAK1 and STAT2-mediated phosphorylation of STAT3. In turn, STAT3 translocates to the nucleus where it drives expression of anti-inflammatory mediators. Targets antigen-presenting cells (APCs) such as macrophages and monocytes and inhibits their release of pro-inflammatory cytokines including granulocyte-macrophage colony-stimulating factor /GM-CSF, granulocyte colony-stimulating factor/G-CSF, IL-1 alpha, IL-1 beta, IL-6, IL-8 and TNF-alpha. Also interferes with antigen presentation by reducing the expression of MHC-class II and co-stimulatory molecules, thereby inhibiting their ability to induce T cell activation. In addition, controls the inflammatory response of macrophages by reprogramming essential metabolic pathways including mTOR signaling. This Ovis aries (Sheep) protein is Interleukin-10 (IL10).